Reading from the N-terminus, the 479-residue chain is MPRTSLLTLACALATGASAFSYGAAIPQSTQEKQFSQEFRDGYSILKHYGGNGPYSERVSYGIARDPPTSCEVDQVIMVKRHGERYPSPSAGKDIEEALAKVYSINTTEYKGDLAFLNDWTYYVPNECYYNAETTSGPYAGLLDAYNHGNDYKARYGHLWNGETVVPFFSSGYGRVIETARKFGEGFFGYNYSTNAALNIISESEVMGADSLTPTCDTDNDQTTCDNLTYQLPQFKVAAARLNSQNPGMNLTASDVYNLMVMASFELNARPFSNWINAFTQDEWVSFGYVEDLNYYYCAGPGDKNMAAVGAVYANASLTLLNQGPKEAGSLFFNFAHDTNITPILAALGVLIPNEDLPLDRVAFGNPYSIGNIVPMGGHLTIERLSCQATALSDEGTYVRLVLNEAVLPFNDCTSGPGYSCPLANYTSILNKNLPDYTTTCNVSASYPQYLSFWWNYNTTTELNYRSSPIACQEGDAMD.

Residues 1 to 19 (MPRTSLLTLACALATGASA) form the signal peptide. Disulfide bonds link Cys-71/Cys-387, Cys-128/Cys-472, Cys-216/Cys-441, Cys-225/Cys-298, and Cys-413/Cys-421. The Nucleophile role is filled by His-82. Asn-191 carries N-linked (GlcNAc...) asparagine glycosylation. A glycan (N-linked (GlcNAc...) asparagine) is linked at Asn-315. Residue Asp-338 is the Proton donor of the active site. The N-linked (GlcNAc...) asparagine glycan is linked to Asn-458.

Belongs to the histidine acid phosphatase family. As to quaternary structure, homodimer.

The enzyme catalyses 1D-myo-inositol hexakisphosphate + H2O = 1D-myo-inositol 1,2,4,5,6-pentakisphosphate + phosphate. In terms of biological role, catalyzes the hydrolysis of inorganic orthophosphate from phytate. The chain is 3-phytase B (phyB) from Aspergillus awamori (Black koji mold).